The sequence spans 530 residues: Plexin domain-containing protein 2 (530 aa).

A signal peptide spans 1–30 (MARFRRADLAAAGVMLLCHFLTDRFQFAHG). Topologically, residues 31-455 (EPGHHTNDWI…AEKKGGTLHA (425 aa)) are extracellular. 2 N-linked (GlcNAc...) asparagine glycosylation sites follow: asparagine 103 and asparagine 160. The 46-residue stretch at 327-372 (TCLQFNGCGPCVSSQIGFNCSWCSKLQRCSSGFDRHRQDWVDSGCP) folds into the PSI domain. A compositionally biased stretch (basic and acidic residues) spans 378 to 387 (KEKMCEKTEP). Positions 378 to 399 (KEKMCEKTEPGETSQTTTTSHT) are disordered. Low complexity predominate over residues 390 to 399 (TSQTTTTSHT). Residues 456–476 (GLIVGILILVLIIAAAILVTV) form a helical membrane-spanning segment. Residues 477-530 (YMYHHPTSAASIFFIERRPSRWPAMKFRRGSGHPAYAEVEPVGEKEGFIVSEQC) are Cytoplasmic-facing. Serine 507 bears the Phosphoserine mark.

This sequence belongs to the plexin family. Interacts with CTTN. In terms of tissue distribution, expressed in tumor endothelium and in vessels of some normal tissues, such as the muscle and lung.

The protein resides in the membrane. May play a role in tumor angiogenesis. This is Plexin domain-containing protein 2 (Plxdc2) from Mus musculus (Mouse).